We begin with the raw amino-acid sequence, 155 residues long: V-type proton ATPase 16 kDa proteolipid subunit c (155 aa).

The Lumenal portion of the chain corresponds to 1-10; that stretch reads MADIKNNPEY. Residues 11–33 traverse the membrane as a helical segment; that stretch reads SSFFGVMGASSAMVFSAMGAAYG. The Cytoplasmic segment spans residues 34–55; it reads TAKSGTGIAAMSVMRPELIMKS. Residues 56-76 traverse the membrane as a helical segment; that stretch reads IIPVVMAGIIAIYGLVVAVLI. Over 77-92 the chain is Lumenal; the sequence is ANSLTDGITLYRSFLQ. The helical transmembrane segment at 93 to 114 threads the bilayer; the sequence is LGAGLSVGLSGLAAGFAIGIVG. Topologically, residues 115 to 131 are cytoplasmic; the sequence is DAGVRGTAQQPRLFVGM. A helical transmembrane segment spans residues 132–152; it reads ILILIFAEVLGLYGLIVALIL. Over 153 to 155 the chain is Lumenal; it reads STK.

Belongs to the V-ATPase proteolipid subunit family. In terms of assembly, V-ATPase is a heteromultimeric enzyme made up of two complexes: the ATP-hydrolytic V1 complex and the proton translocation V0 complex. The V1 complex consists of three catalytic AB heterodimers that form a heterohexamer, three peripheral stalks each consisting of EG heterodimers, one central rotor including subunits D and F, and the regulatory subunits C and H. The proton translocation complex V0 consists of the proton transport subunit a, a ring of proteolipid subunits c9c'', rotary subunit d, subunits e and f, and the accessory subunits ATP6AP1/Ac45 and ATP6AP2/PRR. Interacts with the V0 complex V-ATPase subunit a4 ATP6V0A4. Interacts with LASS2. Interacts with RNF182; this interaction leads to ubiquitination and degradation via the proteasome pathway. Ubiquitinated by RNF182, leading to its degradation via the ubiquitin-proteasome pathway.

The protein localises to the cytoplasmic vesicle. It localises to the clathrin-coated vesicle membrane. It is found in the secretory vesicle. The protein resides in the synaptic vesicle membrane. Its function is as follows. Proton-conducting pore forming subunit of the V0 complex of vacuolar(H+)-ATPase (V-ATPase), a multisubunit enzyme composed of a peripheral complex (V1) that hydrolyzes ATP and a membrane integral complex (V0) that translocates protons. V-ATPase is responsible for acidifying and maintaining the pH of intracellular compartments and in some cell types, is targeted to the plasma membrane, where it is responsible for acidifying the extracellular environment. The polypeptide is V-type proton ATPase 16 kDa proteolipid subunit c (Atp6v0c) (Mus musculus (Mouse)).